The chain runs to 122 residues: Riboflavin kinase (122 aa).

Position 4–9 (4–9 (GFGEGA)) interacts with CDP. The Mg(2+) site is built by T33 and N35. 2 residues coordinate FMN: T84 and E92. 97 to 100 (VNLR) contributes to the CDP binding site.

The protein belongs to the archaeal riboflavin kinase family. The cofactor is Mg(2+).

It catalyses the reaction riboflavin + CTP = CDP + FMN + H(+). It functions in the pathway cofactor biosynthesis; FMN biosynthesis; FMN from riboflavin (CTP route): step 1/1. In terms of biological role, catalyzes the CTP-dependent phosphorylation of riboflavin (vitamin B2) to form flavin mononucleotide (FMN). In Methanothermobacter thermautotrophicus (strain ATCC 29096 / DSM 1053 / JCM 10044 / NBRC 100330 / Delta H) (Methanobacterium thermoautotrophicum), this protein is Riboflavin kinase.